The sequence spans 592 residues: Insulin-like growth factor 2 mRNA-binding protein 2 (592 aa).

RRM domains are found at residues 3–76 and 82–157; these read NKLY…YSVS and RRIQ…YIPD. A Phosphoserine modification is found at Ser-11. The tract at residues 157–182 is disordered; that stretch reads DEEVSSPSPPHRAREQGHGPGSSSQA. Phosphoserine is present on residues Ser-162 and Ser-164. KH domains follow at residues 186–251, 267–334, 420–485, and 502–568; these read DFPL…CRMI, EVPL…EIEI, QETV…QGRI, and KLEA…QRKI. Thr-543 is modified (phosphothreonine).

The protein belongs to the RRM IMP/VICKZ family. As to quaternary structure, can form homooligomers and heterooligomers with IGF2BP1 and IGF2BP3 in an RNA-dependent manner. Interacts with HNRPD. Interacts with IGF2BP1. Interacts with ELAVL1, DHX9, HNRNPU, MATR3 and PABPC1. In terms of tissue distribution, expressed in oocytes, granulosa cells of small and growing follicles and Leydig cells of the testis (at protein level). Expressed in testis and ovary.

It is found in the nucleus. The protein localises to the cytoplasm. It localises to the P-body. The protein resides in the stress granule. In terms of biological role, RNA-binding factor that recruits target transcripts to cytoplasmic protein-RNA complexes (mRNPs). This transcript 'caging' into mRNPs allows mRNA transport and transient storage. It also modulates the rate and location at which target transcripts encounter the translational apparatus and shields them from endonuclease attacks or microRNA-mediated degradation. Preferentially binds to N6-methyladenosine (m6A)-containing mRNAs and increases their stability. Binds to the 5'-UTR of the insulin-like growth factor 2 (IGF2) mRNAs. Binding is isoform-specific. Binds to beta-actin/ACTB and MYC transcripts. Increases MYC mRNA stability by binding to the coding region instability determinant (CRD) and binding is enhanced by m6A-modification of the CRD. In Mus musculus (Mouse), this protein is Insulin-like growth factor 2 mRNA-binding protein 2 (Igf2bp2).